The primary structure comprises 122 residues: Large ribosomal subunit protein uL14 (122 aa).

This sequence belongs to the universal ribosomal protein uL14 family. In terms of assembly, part of the 50S ribosomal subunit. Forms a cluster with proteins L3 and L19. In the 70S ribosome, L14 and L19 interact and together make contacts with the 16S rRNA in bridges B5 and B8.

In terms of biological role, binds to 23S rRNA. Forms part of two intersubunit bridges in the 70S ribosome. This is Large ribosomal subunit protein uL14 from Solibacter usitatus (strain Ellin6076).